A 314-amino-acid polypeptide reads, in one-letter code: Olfactory receptor 5P76 (314 aa).

Topologically, residues 1–28 (MAFLEDGNHTAVTGFILLGLTDDPVLRV) are extracellular. The N-linked (GlcNAc...) asparagine glycan is linked to Asn-8. Residues 29 to 49 (VLFVIILCIYLVTVSGNLSTI) form a helical membrane-spanning segment. The Cytoplasmic portion of the chain corresponds to 50–57 (LLIRVSSQ). The helical transmembrane segment at 58-78 (LHHPMYFFLSHLASADIGYSS) threads the bilayer. Over 79 to 102 (SVTPNMLVNFLVERNTISYLGCGI) the chain is Extracellular. Cys-100 and Cys-192 are joined by a disulfide. A helical transmembrane segment spans residues 103–123 (QLGSAVFFGTVECFLLAAMAY). At 124–136 (DRFIAICSPLLYS) the chain is on the cytoplasmic side. The chain crosses the membrane as a helical span at residues 137 to 157 (NKMSTQVCVQLLVGSYIGGFL). At 158–199 (NASSFTLSFFSLVFCGPNRVNHFFCDFAPLVKLSCSDVSVPA) the chain is on the extracellular side. A helical transmembrane segment spans residues 200–220 (VVPSFTAGSIIIVTIFVIAVS). Over 221–240 (YIYILITILKMRSTEGRQKA) the chain is Cytoplasmic. The chain crosses the membrane as a helical span at residues 241–261 (FSTCTSHLTAVTLFYGTITFI). Over 262–274 (YVMPKSSYSTDQN) the chain is Extracellular. Residues 275-295 (KVVSVFYMVVVPMLNPLIYSL) form a helical membrane-spanning segment. Residues 296–314 (RNKEIKGALKRQLAKNTFS) are Cytoplasmic-facing.

Belongs to the G-protein coupled receptor 1 family.

The protein resides in the cell membrane. Potential odorant receptor. The sequence is that of Olfactory receptor 5P76 from Mus musculus (Mouse).